A 146-amino-acid chain; its full sequence is MDLSNLKAAEGSVHSDNFRRGRGHGSGNGKTAGKGHKGQKARSGAPRPGFEGGQMPLYRRLPKRGFKNRNTLTIVPINLSALERFDNDAVVSVETLIEAGIVKNPRDGVKILGNGELTKKLTVQANAFSASAKEKIEALGGKAEVI.

The segment at Met1–Leu57 is disordered.

Belongs to the universal ribosomal protein uL15 family. Part of the 50S ribosomal subunit.

In terms of biological role, binds to the 23S rRNA. The sequence is that of Large ribosomal subunit protein uL15 from Agathobacter rectalis (strain ATCC 33656 / DSM 3377 / JCM 17463 / KCTC 5835 / VPI 0990) (Eubacterium rectale).